The sequence spans 107 residues: Polyketide synthase CurG (107 aa).

Its pathway is antibiotic biosynthesis; curamycin biosynthesis. The sequence is that of Polyketide synthase CurG (curG) from Streptomyces cyaneus (Streptomyces curacoi).